The primary structure comprises 439 residues: Taxadien-5-alpha-ol O-acetyltransferase (439 aa).

Active-site proton acceptor residues include histidine 164 and aspartate 373.

It belongs to the plant acyltransferase family.

It carries out the reaction taxa-4(20),11-dien-5alpha-ol + acetyl-CoA = taxa-4(20),11-dien-5alpha-yl acetate + CoA. It participates in alkaloid biosynthesis; taxol biosynthesis; 10-deacetyl-2-debenzoylbaccatin III from taxa-4(20),11-dien-5alpha-ol: step 1/3. In Taxus cuspidata (Japanese yew), this protein is Taxadien-5-alpha-ol O-acetyltransferase (TAT).